The sequence spans 217 residues: Large ribosomal subunit protein uL1 (217 aa).

It belongs to the universal ribosomal protein uL1 family. As to quaternary structure, component of the large ribosomal subunit.

Its subcellular location is the cytoplasm. Component of the large ribosomal subunit. The ribosome is a large ribonucleoprotein complex responsible for the synthesis of proteins in the cell. This Xenopus laevis (African clawed frog) protein is Large ribosomal subunit protein uL1 (rpl10a).